The sequence spans 153 residues: Myosin regulatory light chain LC-2, mantle muscle (153 aa).

Residue alanine 1 is modified to Blocked amino end (Ala). 2 consecutive EF-hand domains span residues 13 to 48 (RQMQ…LGRV) and 82 to 117 (DPED…MGDN). Positions 26, 28, 30, and 37 each coordinate Ca(2+).

Functionally, in molluscan muscle, calcium regulation is associated with myosin rather than with actin. Muscle myosin contains two types of light chains: the catalytic light chain, essential for ATPase activity, and the regulatory light chain, a calcium-binding protein responsible for Ca(2+) dependent binding and Ca(2+) dependent Mg-ATPase activity. The protein is Myosin regulatory light chain LC-2, mantle muscle of Todarodes pacificus (Japanese flying squid).